The sequence spans 279 residues: Ferredoxin-type protein NapG (279 aa).

The segment at residues 1–50 (MKVRLKSKKKMKKPALNPERRKFLKEATRTAGGLAGVGILLGLQQNQSLA) is a signal peptide (tat-type signal). 4 4Fe-4S ferredoxin-type domains span residues 63-92 (QDAKAFSAACIRCGQCVQACPYDMLHLASL), 100-132 (TPYFIARDKPCEMCPDIPCAKACPSGALDRQAT), 141-177 (LSVLLDHETCLNYQGLRCDVCYRVCPLIDKAITLETQ), and 188-219 (FIPTVHSDACTGCGKCEQACVLEEAAIKILPM). [4Fe-4S] cluster is bound by residues Cys72, Cys75, Cys78, Cys82, Cys110, Cys113, Cys118, Cys122, Cys150, Cys158, Cys161, Cys165, Cys197, Cys200, Cys203, and Cys207.

Requires [4Fe-4S] cluster as cofactor. Post-translationally, predicted to be exported by the Tat system. The position of the signal peptide cleavage has not been experimentally proven.

It is found in the periplasm. Its function is as follows. Required for electron transfer from ubiquinol, via NapC, to the periplasmic nitrate reductase NapAB complex. This Haemophilus influenzae (strain ATCC 51907 / DSM 11121 / KW20 / Rd) protein is Ferredoxin-type protein NapG (napG).